Consider the following 352-residue polypeptide: Ion-translocating oxidoreductase complex subunit D (352 aa).

The next 4 helical transmembrane spans lie at 20–40, 42–62, 89–109, and 123–143; these read IMLL…WFFG, GTLV…ALVL, IPPL…VIIA, and PAMI…TSWL. Position 187 is an FMN phosphoryl threonine (T187). 5 consecutive transmembrane segments (helical) span residues 214–234, 242–262, 267–287, 301–321, and 322–342; these read ILAG…GLWL, WHIP…GWLF, LAAP…FFIL, LIFG…GGYP, and DGVA…DYYT.

It belongs to the NqrB/RnfD family. As to quaternary structure, the complex is composed of six subunits: RsxA, RsxB, RsxC, RsxD, RsxE and RsxG. The cofactor is FMN.

It is found in the cell inner membrane. Part of a membrane-bound complex that couples electron transfer with translocation of ions across the membrane. Required to maintain the reduced state of SoxR. In Shigella sonnei (strain Ss046), this protein is Ion-translocating oxidoreductase complex subunit D.